The sequence spans 185 residues: Ribosome-recycling factor (185 aa).

It belongs to the RRF family.

The protein resides in the cytoplasm. Responsible for the release of ribosomes from messenger RNA at the termination of protein biosynthesis. May increase the efficiency of translation by recycling ribosomes from one round of translation to another. The sequence is that of Ribosome-recycling factor from Pseudomonas putida (strain ATCC 700007 / DSM 6899 / JCM 31910 / BCRC 17059 / LMG 24140 / F1).